The chain runs to 804 residues: Enhancer of polycomb homolog 2 (804 aa).

Disordered stretches follow at residues 372-398 (QSSD…PDGS), 484-507 (GFSS…SDRH), 602-623 (QQSQ…KSDC), and 642-669 (NSPT…VQPS). A compositionally biased stretch (low complexity) spans 602 to 611 (QQSQQSLQQS). A compositionally biased stretch (polar residues) spans 654-669 (DQNAGHSNLNGVVQPS).

It belongs to the enhancer of polycomb family.

It is found in the nucleus. In terms of biological role, may play a role in transcription or DNA repair. In Xenopus tropicalis (Western clawed frog), this protein is Enhancer of polycomb homolog 2 (epc2).